Here is a 309-residue protein sequence, read N- to C-terminus: NADH-cytochrome b5 reductase 1 (309 aa).

The chain crosses the membrane as a helical span at residues 30–50 (FVPYAVAVTAILAGLKLFTGG). Residues 60 to 165 (TEFQEFVLKE…RGPKGAMVYT (106 aa)) enclose the FAD-binding FR-type domain. FAD-binding positions include 145 to 160 (TTLK…GPKG) and 171 to 208 (HIGM…KLDL).

The protein belongs to the flavoprotein pyridine nucleotide cytochrome reductase family. As to quaternary structure, monomer. Component of the 2-(3-amino-3-carboxypropyl)histidine synthase complex composed of dph1, dph2, dph3 and a NADH-dependent reductase, predominantly cbr1. The cofactor is FAD.

It is found in the mitochondrion outer membrane. The catalysed reaction is 2 Fe(III)-[cytochrome b5] + NADH = 2 Fe(II)-[cytochrome b5] + NAD(+) + H(+). It carries out the reaction 2 Fe(3+)-[Dph3] + NADH = 2 Fe(2+)-[Dph3] + NAD(+) + H(+). It functions in the pathway protein modification; peptidyl-diphthamide biosynthesis. In terms of biological role, NADH-dependent reductase for dph3 and cytochrome b5. Required for the first step of diphthamide biosynthesis, a post-translational modification of histidine which occurs in elongation factor 2. Dph1 and dph2 transfer a 3-amino-3-carboxypropyl (ACP) group from S-adenosyl-L-methionine (SAM) to a histidine residue, the reaction is assisted by a reduction system comprising dph3 and a NADH-dependent reductase, predominantly cbr1. By reducing dph3, also involved in the formation of the tRNA wobble base modification mcm5s 2U (5-methoxycarbonylmethyl-2-thiouridine), mediated by the elongator complex. The cytochrome b5/NADH cytochrome b5 reductase electron transfer system supports the catalytic activity of several sterol biosynthetic enzymes. This Aspergillus fumigatus (strain ATCC MYA-4609 / CBS 101355 / FGSC A1100 / Af293) (Neosartorya fumigata) protein is NADH-cytochrome b5 reductase 1 (cbr1).